Reading from the N-terminus, the 421-residue chain is Gamma-glutamyl phosphate reductase (421 aa).

It belongs to the gamma-glutamyl phosphate reductase family.

It is found in the cytoplasm. The enzyme catalyses L-glutamate 5-semialdehyde + phosphate + NADP(+) = L-glutamyl 5-phosphate + NADPH + H(+). Its pathway is amino-acid biosynthesis; L-proline biosynthesis; L-glutamate 5-semialdehyde from L-glutamate: step 2/2. Catalyzes the NADPH-dependent reduction of L-glutamate 5-phosphate into L-glutamate 5-semialdehyde and phosphate. The product spontaneously undergoes cyclization to form 1-pyrroline-5-carboxylate. The sequence is that of Gamma-glutamyl phosphate reductase from Pseudomonas fluorescens (strain ATCC BAA-477 / NRRL B-23932 / Pf-5).